A 94-amino-acid polypeptide reads, in one-letter code: Cell division topological specificity factor (94 aa).

This sequence belongs to the MinE family.

In terms of biological role, prevents the cell division inhibition by proteins MinC and MinD at internal division sites while permitting inhibition at polar sites. This ensures cell division at the proper site by restricting the formation of a division septum at the midpoint of the long axis of the cell. This is Cell division topological specificity factor from Synechococcus sp. (strain CC9311).